The primary structure comprises 162 residues: NADPH-dependent 7-cyano-7-deazaguanine reductase (162 aa).

The active-site Thioimide intermediate is the Cys53. Asp60 serves as the catalytic Proton donor. Substrate is bound by residues 75–77 and 94–95; these read VES and HE.

It belongs to the GTP cyclohydrolase I family. QueF type 1 subfamily.

Its subcellular location is the cytoplasm. The catalysed reaction is 7-aminomethyl-7-carbaguanine + 2 NADP(+) = 7-cyano-7-deazaguanine + 2 NADPH + 3 H(+). It functions in the pathway tRNA modification; tRNA-queuosine biosynthesis. Its function is as follows. Catalyzes the NADPH-dependent reduction of 7-cyano-7-deazaguanine (preQ0) to 7-aminomethyl-7-deazaguanine (preQ1). This Streptococcus mutans serotype c (strain ATCC 700610 / UA159) protein is NADPH-dependent 7-cyano-7-deazaguanine reductase.